The following is a 739-amino-acid chain: tRNA 5-methylaminomethyl-2-thiouridine biosynthesis bifunctional protein MnmC (739 aa).

A tRNA (mnm(5)s(2)U34)-methyltransferase region spans residues M1–L282. The interval I330–S739 is FAD-dependent cmnm(5)s(2)U34 oxidoreductase.

The protein in the N-terminal section; belongs to the methyltransferase superfamily. tRNA (mnm(5)s(2)U34)-methyltransferase family. It in the C-terminal section; belongs to the DAO family. FAD serves as cofactor.

The protein resides in the cytoplasm. It catalyses the reaction 5-aminomethyl-2-thiouridine(34) in tRNA + S-adenosyl-L-methionine = 5-methylaminomethyl-2-thiouridine(34) in tRNA + S-adenosyl-L-homocysteine + H(+). In terms of biological role, catalyzes the last two steps in the biosynthesis of 5-methylaminomethyl-2-thiouridine (mnm(5)s(2)U) at the wobble position (U34) in tRNA. Catalyzes the FAD-dependent demodification of cmnm(5)s(2)U34 to nm(5)s(2)U34, followed by the transfer of a methyl group from S-adenosyl-L-methionine to nm(5)s(2)U34, to form mnm(5)s(2)U34. The sequence is that of tRNA 5-methylaminomethyl-2-thiouridine biosynthesis bifunctional protein MnmC from Psychrobacter sp. (strain PRwf-1).